The following is a 603-amino-acid chain: Arginine--tRNA ligase (603 aa).

Residues 143–153 carry the 'HIGH' region motif; the sequence is PNIAKEMHVGH.

It belongs to the class-I aminoacyl-tRNA synthetase family. Monomer.

It localises to the cytoplasm. It catalyses the reaction tRNA(Arg) + L-arginine + ATP = L-arginyl-tRNA(Arg) + AMP + diphosphate. This chain is Arginine--tRNA ligase, found in Prochlorococcus marinus (strain MIT 9303).